We begin with the raw amino-acid sequence, 167 residues long: CS6 fimbrial subunit B (167 aa).

The N-terminal stretch at 1-21 (MLKKIIPAIVLIAGTSGVVNA) is a signal peptide.

It is found in the fimbrium. The chain is CS6 fimbrial subunit B (cssB) from Escherichia coli.